Consider the following 118-residue polypeptide: Large ribosomal subunit protein bL19 (118 aa).

It belongs to the bacterial ribosomal protein bL19 family.

Its function is as follows. This protein is located at the 30S-50S ribosomal subunit interface and may play a role in the structure and function of the aminoacyl-tRNA binding site. This is Large ribosomal subunit protein bL19 from Alcanivorax borkumensis (strain ATCC 700651 / DSM 11573 / NCIMB 13689 / SK2).